Here is a 225-residue protein sequence, read N- to C-terminus: Rho GDP-dissociation inhibitor 3 (225 aa).

This sequence belongs to the Rho GDI family.

The protein localises to the cytoplasm. Functionally, inhibits GDP/GTP exchange reaction of RhoB. Interacts specifically with the GDP- and GTP-bound forms of post-translationally processed Rhob and Rhog proteins, both of which show a growth-regulated expression in mammalian cells. Stimulates the release of the GDP-bound but not the GTP-bound RhoB protein. Also inhibits the GDP/GTP exchange of RhoB but shows less ability to inhibit the dissociation of prebound GTP. The polypeptide is Rho GDP-dissociation inhibitor 3 (ARHGDIG) (Bos taurus (Bovine)).